A 143-amino-acid polypeptide reads, in one-letter code: Large ribosomal subunit protein uL13 (143 aa).

The protein belongs to the universal ribosomal protein uL13 family. As to quaternary structure, part of the 50S ribosomal subunit.

Functionally, this protein is one of the early assembly proteins of the 50S ribosomal subunit, although it is not seen to bind rRNA by itself. It is important during the early stages of 50S assembly. This is Large ribosomal subunit protein uL13 from Prochlorococcus marinus subsp. pastoris (strain CCMP1986 / NIES-2087 / MED4).